The following is a 471-amino-acid chain: UTP--glucose-1-phosphate uridylyltransferase (471 aa).

UTP contacts are provided by residues 87-90, K101, Q164, and G193; that span reads LNGG. 89-90 contacts substrate; the sequence is GG. Substrate contacts are provided by residues H194 and 222-224; that span reads NSD. D224 and K362 together coordinate UTP.

It belongs to the UDPGP type 1 family.

It is found in the cytoplasm. The enzyme catalyses alpha-D-glucose 1-phosphate + UTP + H(+) = UDP-alpha-D-glucose + diphosphate. Plays a central role as a glucosyl donor in cellular metabolic pathways. This chain is UTP--glucose-1-phosphate uridylyltransferase, found in Pyrus pyrifolia (Chinese pear).